Reading from the N-terminus, the 428-residue chain is Serine--tRNA ligase (428 aa).

An L-serine-binding site is contributed by 231-233 (TAE). Position 262 to 264 (262 to 264 (RSE)) interacts with ATP. Glu285 contacts L-serine. 349 to 352 (EISS) provides a ligand contact to ATP. An L-serine-binding site is contributed by Ser385.

The protein belongs to the class-II aminoacyl-tRNA synthetase family. Type-1 seryl-tRNA synthetase subfamily. Homodimer. The tRNA molecule binds across the dimer.

It localises to the cytoplasm. The enzyme catalyses tRNA(Ser) + L-serine + ATP = L-seryl-tRNA(Ser) + AMP + diphosphate + H(+). The catalysed reaction is tRNA(Sec) + L-serine + ATP = L-seryl-tRNA(Sec) + AMP + diphosphate + H(+). Its pathway is aminoacyl-tRNA biosynthesis; selenocysteinyl-tRNA(Sec) biosynthesis; L-seryl-tRNA(Sec) from L-serine and tRNA(Sec): step 1/1. Catalyzes the attachment of serine to tRNA(Ser). Is also able to aminoacylate tRNA(Sec) with serine, to form the misacylated tRNA L-seryl-tRNA(Sec), which will be further converted into selenocysteinyl-tRNA(Sec). The chain is Serine--tRNA ligase from Staphylococcus aureus (strain Mu3 / ATCC 700698).